The chain runs to 92 residues: Acylphosphatase (92 aa).

Cys-5 and Cys-49 are joined by a disulfide. The 88-residue stretch at 5-92 (CIIAWIYGRV…SGELTDFRIR (88 aa)) folds into the Acylphosphatase-like domain. Residues Arg-20 and Asn-38 contribute to the active site.

It belongs to the acylphosphatase family.

It catalyses the reaction an acyl phosphate + H2O = a carboxylate + phosphate + H(+). The polypeptide is Acylphosphatase (Escherichia coli O1:K1 / APEC).